The primary structure comprises 305 residues: Coenzyme PQQ synthesis protein B (305 aa).

The protein belongs to the PqqB family.

It participates in cofactor biosynthesis; pyrroloquinoline quinone biosynthesis. Functionally, may be involved in the transport of PQQ or its precursor to the periplasm. The polypeptide is Coenzyme PQQ synthesis protein B (Cupriavidus taiwanensis (strain DSM 17343 / BCRC 17206 / CCUG 44338 / CIP 107171 / LMG 19424 / R1) (Ralstonia taiwanensis (strain LMG 19424))).